A 616-amino-acid polypeptide reads, in one-letter code: MALLQISEPGLSAAPHQRRLAAGIDLGTTNSLVATVRSGQAETLADHEGRHLLPSVVHYQQQGHSVGYDARTNAALDTANTISSVKRLMGRSLADIQQRYPHLPYQFQASENGLPMIETAAGLLNPVRVSADILKALAARATEALAGELDGVVITVPAYFDDAQRQGTKDAARLAGLHVLRLLNEPTAAAIAYGLDSGQEGVIAVYDLGGGTFDISILRLSRGVFEVLATGGDSALGGDDFDHLLADYIREQAGIPDRSDNRVQRELLDAAIAAKIALSYADSVTVNVAGWQGEISREQFNELIAPLVKRTLLACRRALKDAGVEADEVLEVVMVGGSTRVPLVRERVGEFFGRPPLTSIDPDKVVAIGAAIQADILVGNKPDSEMLLLDVIPLSLGLETMGGLVEKVIPRNTTIPVARAQDFTTFKDGQTAMSIHVMQGERELVQDCRSLARFALRGIPALPAGGAHIRVTFQVDADGLLSVTAMEKSTGVEASIQVKPSYGLTDSEIASMIKDSMSYAEQDVKARMLAEQKVEAARVLESLHGALAADAALLSAAERQVIDDAAAHLSEVAQGDDVDAIEQAIKNVDKQTQDFAARRMDQSVRRALKGHSVDEV.

This sequence belongs to the heat shock protein 70 family.

In terms of biological role, chaperone involved in the maturation of iron-sulfur cluster-containing proteins. Has a low intrinsic ATPase activity which is markedly stimulated by HscB. Involved in the maturation of IscU. This chain is Chaperone protein HscA, found in Escherichia coli O139:H28 (strain E24377A / ETEC).